Consider the following 295-residue polypeptide: Tyrosine recombinase XerC (295 aa).

In terms of domain architecture, Core-binding (CB) spans 1-85 (MLTALNRYWD…ALRRFLSFLV (85 aa)). One can recognise a Tyr recombinase domain in the interval 106 to 285 (HLPKNMDGEQ…NFQHLAEVYD (180 aa)). Active-site residues include Arg-145, Lys-169, His-237, Arg-240, and His-263. Tyr-272 (O-(3'-phospho-DNA)-tyrosine intermediate) is an active-site residue.

Belongs to the 'phage' integrase family. XerC subfamily. As to quaternary structure, forms a cyclic heterotetrameric complex composed of two molecules of XerC and two molecules of XerD.

The protein localises to the cytoplasm. Functionally, site-specific tyrosine recombinase, which acts by catalyzing the cutting and rejoining of the recombining DNA molecules. The XerC-XerD complex is essential to convert dimers of the bacterial chromosome into monomers to permit their segregation at cell division. It also contributes to the segregational stability of plasmids. This is Tyrosine recombinase XerC from Haemophilus influenzae (strain PittEE).